The sequence spans 245 residues: ATP synthase subunit a (245 aa).

The next 7 helical transmembrane spans lie at 5–25 (LWFT…MMSV), 37–57 (ISNY…FFIA), 99–119 (YIVT…IPGF), 125–145 (FPSV…VHGL), 157–177 (FLGP…CSHF), 187–209 (LYAN…PLGF), and 221–241 (SLIQ…EATA).

Belongs to the ATPase A chain family. F-type ATPases have 2 components, CF(1) - the catalytic core - and CF(0) - the membrane proton channel. CF(1) has five subunits: alpha(3), beta(3), gamma(1), delta(1), epsilon(1). CF(0) has three main subunits: a(1), b(2) and c(9-12). The alpha and beta chains form an alternating ring which encloses part of the gamma chain. CF(1) is attached to CF(0) by a central stalk formed by the gamma and epsilon chains, while a peripheral stalk is formed by the delta and b chains.

The protein resides in the cell inner membrane. Its function is as follows. Key component of the proton channel; it plays a direct role in the translocation of protons across the membrane. This chain is ATP synthase subunit a, found in Koribacter versatilis (strain Ellin345).